Here is a 221-residue protein sequence, read N- to C-terminus: CASP-like protein 4C1 (221 aa).

The segment at 1-21 is disordered; sequence MDSPESSDRGLNPMTPDHGGH. The Cytoplasmic segment spans residues 1-54; it reads MDSPESSDRGLNPMTPDHGGHNGKVVHYFGQGVEGGPASPRKLGHGHLHPKANT. Residues 55–75 traverse the membrane as a helical segment; the sequence is ALLLLRLLTFAFSLASLVIMA. Over 76–101 the chain is Extracellular; that stretch reads TNSATTTATAGRHRTVNWVDFDTYRY. Residues 102-122 form a helical membrane-spanning segment; that stretch reads VLAACAIVCLYSFAEIGLGLW. The Cytoplasmic portion of the chain corresponds to 123–144; it reads YLLKGRMVMPESMAHWFDFGHD. A helical membrane pass occupies residues 145–165; sequence QGFAYLIFSACSGATAVAHNL. At 166–189 the chain is on the extracellular side; the sequence is RERHILIHGMYGCDEANSFCMKAE. The chain crosses the membrane as a helical span at residues 190–210; it reads ISIGLAFGAFLFIALSSLLSG. At 211 to 221 the chain is on the cytoplasmic side; that stretch reads YRLVKWLILGP.

It belongs to the Casparian strip membrane proteins (CASP) family. Homodimer and heterodimers.

It localises to the cell membrane. This is CASP-like protein 4C1 from Pteridium aquilinum subsp. aquilinum (Bracken fern).